Here is a 396-residue protein sequence, read N- to C-terminus: DNA polymerase IV (396 aa).

A UmuC domain is found at 5–192 (IFHVDVNSAF…LPVGELFMVG (188 aa)). Residues Asp-9 and Asp-111 each contribute to the Mg(2+) site. Glu-112 is an active-site residue.

Belongs to the DNA polymerase type-Y family. In terms of assembly, monomer. The cofactor is Mg(2+).

The protein resides in the cytoplasm. The enzyme catalyses DNA(n) + a 2'-deoxyribonucleoside 5'-triphosphate = DNA(n+1) + diphosphate. Poorly processive, error-prone DNA polymerase involved in untargeted mutagenesis. Copies undamaged DNA at stalled replication forks, which arise in vivo from mismatched or misaligned primer ends. These misaligned primers can be extended by PolIV. Exhibits no 3'-5' exonuclease (proofreading) activity. May be involved in translesional synthesis, in conjunction with the beta clamp from PolIII. This is DNA polymerase IV from Clostridium acetobutylicum (strain ATCC 824 / DSM 792 / JCM 1419 / IAM 19013 / LMG 5710 / NBRC 13948 / NRRL B-527 / VKM B-1787 / 2291 / W).